Consider the following 113-residue polypeptide: Large ribosomal subunit protein bL19 (113 aa).

It belongs to the bacterial ribosomal protein bL19 family.

This protein is located at the 30S-50S ribosomal subunit interface and may play a role in the structure and function of the aminoacyl-tRNA binding site. The protein is Large ribosomal subunit protein bL19 of Nocardia farcinica (strain IFM 10152).